We begin with the raw amino-acid sequence, 562 residues long: Potassium-transporting ATPase potassium-binding subunit (562 aa).

12 consecutive transmembrane segments (helical) span residues 5–25, 65–85, 135–155, 181–201, 257–277, 283–303, 331–351, 358–378, 381–401, 422–442, 486–506, and 528–548; these read GILA…PLGG, AYLR…YAVF, IGIT…AMAF, LLLP…VPET, ILEI…AGHF, LAIV…YIVY, FGLP…TGAV, LMPL…IFGG, VGLL…GLMV, AAML…MALP, ISIG…MLAI, and FAFG…TFFP.

Belongs to the KdpA family. In terms of assembly, the system is composed of three essential subunits: KdpA, KdpB and KdpC.

It localises to the cell membrane. In terms of biological role, part of the high-affinity ATP-driven potassium transport (or Kdp) system, which catalyzes the hydrolysis of ATP coupled with the electrogenic transport of potassium into the cytoplasm. This subunit binds the extracellular potassium ions and delivers the ions to the membrane domain of KdpB through an intramembrane tunnel. The sequence is that of Potassium-transporting ATPase potassium-binding subunit from Alicyclobacillus acidocaldarius subsp. acidocaldarius (strain ATCC 27009 / DSM 446 / BCRC 14685 / JCM 5260 / KCTC 1825 / NBRC 15652 / NCIMB 11725 / NRRL B-14509 / 104-IA) (Bacillus acidocaldarius).